The sequence spans 1066 residues: Phosphatidylinositol 4-kinase PIK1 (1066 aa).

The PIK helical domain maps to 1–133; sequence MHKASSSKKS…GFQVARRVLN (133 aa). Phosphoserine is present on residues serine 10 and serine 236. Disordered regions lie at residues 218–240, 303–411, and 564–624; these read KKTSRSKRVSSNRSSTPTSPIDL, DGKN…KKAN, and NENR…LGDM. Positions 342-356 are enriched in acidic residues; sequence NNEDETGGETEEDAD. Composition is skewed to polar residues over residues 374-411 and 570-597; these read QPRTSSASSASLEGTPKLNRTNSQPLSRQAFKNSKKAN and STLTSNNTRSSVYDSNSFNNGASRNEGL. The residue at position 384 (serine 384) is a Phosphoserine. Threonine 394 carries the post-translational modification Phosphothreonine. Serine 396 and serine 592 each carry phosphoserine. Residues 598-609 are compositionally biased toward low complexity; it reads SSTSRSDSASTA. The PI3K/PI4K catalytic domain maps to 770 to 1049; it reads ATKKERIRKT…FLIGKSLGSI (280 aa). Residues 776–782 form a G-loop region; that stretch reads IRKTSEY. Residues 915 to 923 are catalytic loop; it reads QVKDRHNGN. The tract at residues 934–958 is activation loop; it reads HIDFGFMLSNSPGSVGFEAAPFKLT.

The protein belongs to the PI3/PI4-kinase family. Type III PI4K subfamily. As to quaternary structure, interacts with FRQ1.

The protein resides in the nucleus. It localises to the golgi apparatus. It is found in the trans-Golgi network. It catalyses the reaction a 1,2-diacyl-sn-glycero-3-phospho-(1D-myo-inositol) + ATP = a 1,2-diacyl-sn-glycero-3-phospho-(1D-myo-inositol 4-phosphate) + ADP + H(+). Its function is as follows. Acts on phosphatidylinositol (PI) in the first committed step in the production of the second messenger inositol 1,4,5,-trisphosphate. PIK1 is part of a nuclear phosphoinositide cycle and could control cytokinesis through the actin cytoskeleton. Involved in the response to mating pheromone. This is Phosphatidylinositol 4-kinase PIK1 from Saccharomyces cerevisiae (strain ATCC 204508 / S288c) (Baker's yeast).